We begin with the raw amino-acid sequence, 465 residues long: Cysteine--tRNA ligase (465 aa).

C30 is a binding site for Zn(2+). The 'HIGH' region signature appears at 32–42 (ITVYDYCHIGH). Positions 214, 239, and 243 each coordinate Zn(2+). The 'KMSKS' region motif lies at 271-275 (KMSKS). K274 contacts ATP.

This sequence belongs to the class-I aminoacyl-tRNA synthetase family. As to quaternary structure, monomer. Zn(2+) serves as cofactor.

The protein resides in the cytoplasm. The enzyme catalyses tRNA(Cys) + L-cysteine + ATP = L-cysteinyl-tRNA(Cys) + AMP + diphosphate. In Burkholderia mallei (strain NCTC 10229), this protein is Cysteine--tRNA ligase.